Consider the following 138-residue polypeptide: DNA-directed RNA polymerase subunit omega (138 aa).

A disordered region spans residues 117–138; the sequence is NLLGRDNFFSTPENRNTSNTDS. Over residues 124–138 the composition is skewed to polar residues; sequence FFSTPENRNTSNTDS.

This sequence belongs to the RNA polymerase subunit omega family. In terms of assembly, the RNAP catalytic core consists of 2 alpha, 1 beta, 1 beta' and 1 omega subunit. When a sigma factor is associated with the core the holoenzyme is formed, which can initiate transcription.

It carries out the reaction RNA(n) + a ribonucleoside 5'-triphosphate = RNA(n+1) + diphosphate. Promotes RNA polymerase assembly. Latches the N- and C-terminal regions of the beta' subunit thereby facilitating its interaction with the beta and alpha subunits. This chain is DNA-directed RNA polymerase subunit omega, found in Ehrlichia canis (strain Jake).